The following is a 396-amino-acid chain: Elongation factor Tu (396 aa).

Residues 10–205 (KPHVNIGTIG…ACDESIPDPV (196 aa)) enclose the tr-type G domain. The G1 stretch occupies residues 19–26 (GHVDHGKT). 19-26 (GHVDHGKT) contacts GTP. Threonine 26 provides a ligand contact to Mg(2+). The interval 62 to 66 (GITIN) is G2. A G3 region spans residues 83–86 (DAPG). Residues 83 to 87 (DAPGH) and 138 to 141 (NKCD) each bind GTP. Positions 138–141 (NKCD) are G4. Residues 175 to 177 (SAL) form a G5 region.

Belongs to the TRAFAC class translation factor GTPase superfamily. Classic translation factor GTPase family. EF-Tu/EF-1A subfamily. As to quaternary structure, monomer.

The protein localises to the cytoplasm. The enzyme catalyses GTP + H2O = GDP + phosphate + H(+). Functionally, GTP hydrolase that promotes the GTP-dependent binding of aminoacyl-tRNA to the A-site of ribosomes during protein biosynthesis. In Corynebacterium kroppenstedtii (strain DSM 44385 / JCM 11950 / CIP 105744 / CCUG 35717), this protein is Elongation factor Tu.